The following is a 274-amino-acid chain: Tropomyosin (274 aa).

Residues 1–30 (MKLEKDNAMDRADTLEQQNKEANIRAEKAE) form a disordered region. A coiled-coil region spans residues 1–274 (MKLEKDNAMD…DQTFSELSGY (274 aa)).

The protein belongs to the tropomyosin family. Homodimer.

Tropomyosin, in association with the troponin complex, plays a central role in the calcium dependent regulation of muscle contraction. This is Tropomyosin from Panulirus stimpsoni (Chinese spiny lobster).